A 278-amino-acid chain; its full sequence is Non-heme chloroperoxidase (278 aa).

Residues 24–259 (PIVFHHGWPL…LKTYPGYSHG (236 aa)) form the AB hydrolase-1 domain. Catalysis depends on residues S97, D229, and H258.

This sequence belongs to the AB hydrolase superfamily. Bacterial non-heme haloperoxidase / perhydrolase family. Homodimer.

Its function is as follows. Chlorinates and brominates suitable organic compounds. Involved in the biosynthesis of the antibiotic pyrrolnitrin. The chain is Non-heme chloroperoxidase (cpo) from Burkholderia pyrrocinia (Pseudomonas pyrrocinia).